The following is a 529-amino-acid chain: Putative cysteine ligase BshC (529 aa).

Residues 450 to 485 are a coiled coil; sequence VKQTKGLENLEKRLLKAQKRNLSDQLQRVIDLQCEL.

This sequence belongs to the BshC family.

In Flavobacterium johnsoniae (strain ATCC 17061 / DSM 2064 / JCM 8514 / BCRC 14874 / CCUG 350202 / NBRC 14942 / NCIMB 11054 / UW101) (Cytophaga johnsonae), this protein is Putative cysteine ligase BshC.